A 564-amino-acid polypeptide reads, in one-letter code: CTP synthase (564 aa).

Residues 1 to 265 are amidoligase domain; the sequence is MTKFVFVTGG…DEIVCHRLDI (265 aa). Ser-13 is a binding site for CTP. Residue Ser-13 coordinates UTP. ATP-binding positions include 14–19 and Asp-71; that span reads SLGKGI. 2 residues coordinate Mg(2+): Asp-71 and Glu-139. Residues 146–148, 186–191, and Lys-222 each bind CTP; these read DIE and KTKPTQ. UTP is bound by residues 186–191 and Lys-222; that span reads KTKPTQ. One can recognise a Glutamine amidotransferase type-1 domain in the interval 290–543; it reads SIALVGKYVD…IQAAISFAGQ (254 aa). An L-glutamine-binding site is contributed by Gly-351. The Nucleophile; for glutamine hydrolysis role is filled by Cys-378. Residues 379–382, Glu-402, and Arg-469 each bind L-glutamine; that span reads LGMQ. Catalysis depends on residues His-516 and Glu-518.

It belongs to the CTP synthase family. In terms of assembly, homotetramer.

The catalysed reaction is UTP + L-glutamine + ATP + H2O = CTP + L-glutamate + ADP + phosphate + 2 H(+). The enzyme catalyses L-glutamine + H2O = L-glutamate + NH4(+). It carries out the reaction UTP + NH4(+) + ATP = CTP + ADP + phosphate + 2 H(+). It functions in the pathway pyrimidine metabolism; CTP biosynthesis via de novo pathway; CTP from UDP: step 2/2. Its activity is regulated as follows. Allosterically activated by GTP, when glutamine is the substrate; GTP has no effect on the reaction when ammonia is the substrate. The allosteric effector GTP functions by stabilizing the protein conformation that binds the tetrahedral intermediate(s) formed during glutamine hydrolysis. Inhibited by the product CTP, via allosteric rather than competitive inhibition. In terms of biological role, catalyzes the ATP-dependent amination of UTP to CTP with either L-glutamine or ammonia as the source of nitrogen. Regulates intracellular CTP levels through interactions with the four ribonucleotide triphosphates. The chain is CTP synthase from Nitrosomonas europaea (strain ATCC 19718 / CIP 103999 / KCTC 2705 / NBRC 14298).